A 447-amino-acid polypeptide reads, in one-letter code: Putative branched-chain amino acid carrier protein SSP1343 (447 aa).

Helical transmembrane passes span 6 to 26 (WIIG…IFPP), 40 to 60 (ILAF…VGAL), 74 to 94 (PKFS…LFAI), 116 to 136 (LALF…CINP), 143 to 163 (IGSL…VKGF), 192 to 212 (GYLT…VNAV), 228 to 248 (LMAG…LGYI), 289 to 309 (LLGI…VVAV), 324 to 344 (IYVI…LNSV), 349 to 369 (VPVL…ILLA), 381 to 401 (IPVA…QGWI), and 416 to 436 (LEWF…AAMV).

This sequence belongs to the branched chain amino acid transporter family.

It localises to the cell membrane. Its function is as follows. Component of the transport system for branched-chain amino acids (leucine, isoleucine and valine), which is coupled to a proton motive force. This is Putative branched-chain amino acid carrier protein SSP1343 from Staphylococcus saprophyticus subsp. saprophyticus (strain ATCC 15305 / DSM 20229 / NCIMB 8711 / NCTC 7292 / S-41).